The sequence spans 503 residues: 2-isopropylmalate synthase (503 aa).

In terms of domain architecture, Pyruvate carboxyltransferase spans 4–264; it reads LYIFDTTLRD…EVSIKTEEIY (261 aa). Mn(2+) contacts are provided by aspartate 13, histidine 201, histidine 203, and asparagine 237. The tract at residues 388-503 is regulatory domain; the sequence is KLRHLQVVSG…NQLVMLKGKD (116 aa).

It belongs to the alpha-IPM synthase/homocitrate synthase family. LeuA type 1 subfamily. Homodimer. Requires Mn(2+) as cofactor.

It localises to the cytoplasm. The catalysed reaction is 3-methyl-2-oxobutanoate + acetyl-CoA + H2O = (2S)-2-isopropylmalate + CoA + H(+). The protein operates within amino-acid biosynthesis; L-leucine biosynthesis; L-leucine from 3-methyl-2-oxobutanoate: step 1/4. Catalyzes the condensation of the acetyl group of acetyl-CoA with 3-methyl-2-oxobutanoate (2-ketoisovalerate) to form 3-carboxy-3-hydroxy-4-methylpentanoate (2-isopropylmalate). In Dictyoglomus turgidum (strain DSM 6724 / Z-1310), this protein is 2-isopropylmalate synthase.